We begin with the raw amino-acid sequence, 147 residues long: Large ribosomal subunit protein bL9 (147 aa).

This sequence belongs to the bacterial ribosomal protein bL9 family.

Its function is as follows. Binds to the 23S rRNA. This is Large ribosomal subunit protein bL9 from Geobacter sp. (strain M21).